The following is a 101-amino-acid chain: Ferredoxin-3 (101 aa).

4Fe-4S ferredoxin-type domains lie at 17–46 (YLMK…LHGL) and 70–100 (KVMA…HAAL). C26, C29, C32, C36, C80, C83, C86, and C90 together coordinate [4Fe-4S] cluster.

In terms of assembly, homodimer. The cofactor is [4Fe-4S] cluster.

In terms of biological role, ferredoxins are iron-sulfur proteins that transfer electrons in a wide variety of metabolic reactions. In Rhodobacter capsulatus (Rhodopseudomonas capsulata), this protein is Ferredoxin-3 (fdxB).